Reading from the N-terminus, the 354-residue chain is Serum paraoxonase/arylesterase 2 (354 aa).

Cysteine 42 and cysteine 352 are disulfide-bonded. Glutamate 53 and aspartate 54 together coordinate Ca(2+). The active-site Proton acceptor is histidine 114. 4 residues coordinate Ca(2+): isoleucine 116, asparagine 167, aspartate 168, and asparagine 223. The N-linked (GlcNAc...) asparagine glycan is linked to asparagine 254. 2 residues coordinate Ca(2+): aspartate 268 and asparagine 269. N-linked (GlcNAc...) asparagine glycosylation is found at asparagine 269 and asparagine 323.

It belongs to the paraoxonase family. In terms of assembly, homotrimer. Ca(2+) serves as cofactor. In terms of processing, the signal sequence is not cleaved. As to expression, widely expressed with highest expression in liver, lung, placenta, testis and heart.

It is found in the membrane. It catalyses the reaction a phenyl acetate + H2O = a phenol + acetate + H(+). The enzyme catalyses an N-acyl-L-homoserine lactone + H2O = an N-acyl-L-homoserine + H(+). Functionally, capable of hydrolyzing lactones and a number of aromatic carboxylic acid esters. Has antioxidant activity. Is not associated with high density lipoprotein. Prevents LDL lipid peroxidation, reverses the oxidation of mildly oxidized LDL, and inhibits the ability of MM-LDL to induce monocyte chemotaxis. The polypeptide is Serum paraoxonase/arylesterase 2 (PON2) (Homo sapiens (Human)).